The chain runs to 336 residues: Formimidoylglutamase (336 aa).

Mn(2+) is bound by residues His-129, Asp-160, His-162, Asp-164, Asp-257, and Asp-259.

It belongs to the arginase family. Mn(2+) is required as a cofactor.

The catalysed reaction is N-formimidoyl-L-glutamate + H2O = formamide + L-glutamate. It participates in amino-acid degradation; L-histidine degradation into L-glutamate; L-glutamate from N-formimidoyl-L-glutamate (hydrolase route): step 1/1. In terms of biological role, catalyzes the conversion of N-formimidoyl-L-glutamate to L-glutamate and formamide. In Vibrio vulnificus (strain CMCP6), this protein is Formimidoylglutamase.